A 513-amino-acid chain; its full sequence is Leucine-rich repeat-containing protein 24 (513 aa).

An N-terminal signal peptide occupies residues 1–20; the sequence is MALRAPALLPLLLLLLPLRA. Positions 21-50 constitute an LRRNT domain; sequence AGCPAACRCYSATVECGALRLRVVPLGIPP. LRR repeat units lie at residues 51–72, 75–96, 99–120, 123–144, 147–168, and 171–192; these read GTQT…ALAP, ALRR…AFRA, RLLE…AFVG, QLRV…TFLH, RLQE…ALAG, and SLAL…ALQP. An LRRCT domain is found at 204–259; the sequence is NPWRCDCALHWLGAWIKEGGQRLLTSRDRKIMCAEPPRLALQSLLDVSHSSLICIP. The Ig-like C2-type domain occupies 260–361; the sequence is PSVHVQPLEL…GAARVPFRLL (102 aa). Cysteine 281 and cysteine 345 are oxidised to a cystine. Asparagine 334 and asparagine 363 each carry an N-linked (GlcNAc...) asparagine glycan. The disordered stretch occupies residues 365–391; it reads SRQQPQQPAQPPPPAARPAGSEPRPEA. Residues 406-426 traverse the membrane as a helical segment; that stretch reads AIAAAIALLALTALLLVAMIC.

It is found in the membrane. The chain is Leucine-rich repeat-containing protein 24 (LRRC24) from Homo sapiens (Human).